The following is a 467-amino-acid chain: MTIAQEPTALNFECETGNYHTFCPISCVAWLYQKIEDSFFLVIGTKTCGYFLQNAMGVMIFAEPRYAMAELEEGDISAQLNDYAELKRLCEQIKRDRNPSVIVWIGTCTTEIIKMDLEGLAPKLEGEIGIPIVVARANGLDYAFTQGEDTVLAAMAHRCPDKAPVAEAEKNERNAVQKLLNFGKKKELVAQEESEYVDHPPLVLFGSLPDPVVTQLTLELKKQGIKVSGWLPAKRFTELPVLEEGYYVAGVNPFLSRTATTLMRRRKCKLIGAPFPIGPDGTRAWIEKICSVFGITPKGLDEREAQIWAGLEDYVKLIRGKSVFFMGDNLLEVSLARFLVRCGMTVQEVGIPYMDKRYQAAELAMLEKACQEMGVPSPKMVEKPDNYNQVQRIYDLKPDLVITGMAHANPLEARGINTKWSVEFTFAQIHGFTNARDILELVTRPLRRNNNLKDLGWDKLVREEAKI.

Residues Cys-23, Cys-48, and Cys-108 each coordinate [4Fe-4S] cluster.

Belongs to the BchN/ChlN family. As to quaternary structure, protochlorophyllide reductase is composed of three subunits; ChlL, ChlN and ChlB. Forms a heterotetramer of two ChlB and two ChlN subunits. Requires [4Fe-4S] cluster as cofactor.

The catalysed reaction is chlorophyllide a + oxidized 2[4Fe-4S]-[ferredoxin] + 2 ADP + 2 phosphate = protochlorophyllide a + reduced 2[4Fe-4S]-[ferredoxin] + 2 ATP + 2 H2O. It participates in porphyrin-containing compound metabolism; chlorophyll biosynthesis (light-independent). Component of the dark-operative protochlorophyllide reductase (DPOR) that uses Mg-ATP and reduced ferredoxin to reduce ring D of protochlorophyllide (Pchlide) to form chlorophyllide a (Chlide). This reaction is light-independent. The NB-protein (ChlN-ChlB) is the catalytic component of the complex. This Nostoc sp. (strain PCC 7120 / SAG 25.82 / UTEX 2576) protein is Light-independent protochlorophyllide reductase subunit N.